Here is an 83-residue protein sequence, read N- to C-terminus: Cytochrome b559 subunit alpha (83 aa).

A helical transmembrane segment spans residues 21–35; sequence IIHSITIPSLFIAGW. H23 provides a ligand contact to heme.

It belongs to the PsbE/PsbF family. Heterodimer of an alpha subunit and a beta subunit. PSII is composed of 1 copy each of membrane proteins PsbA, PsbB, PsbC, PsbD, PsbE, PsbF, PsbH, PsbI, PsbJ, PsbK, PsbL, PsbM, PsbT, PsbX, PsbY, PsbZ, Psb30/Ycf12, at least 3 peripheral proteins of the oxygen-evolving complex and a large number of cofactors. It forms dimeric complexes. Heme b is required as a cofactor.

The protein resides in the plastid. The protein localises to the chloroplast thylakoid membrane. In terms of biological role, this b-type cytochrome is tightly associated with the reaction center of photosystem II (PSII). PSII is a light-driven water:plastoquinone oxidoreductase that uses light energy to abstract electrons from H(2)O, generating O(2) and a proton gradient subsequently used for ATP formation. It consists of a core antenna complex that captures photons, and an electron transfer chain that converts photonic excitation into a charge separation. This Lotus japonicus (Lotus corniculatus var. japonicus) protein is Cytochrome b559 subunit alpha.